The sequence spans 105 residues: 3-phenylpropionate/cinnamic acid dioxygenase ferredoxin subunit (105 aa).

Residues 4–99 (LFVCTVEELP…VVVKDGNIYI (96 aa)) enclose the Rieske domain. Positions 42, 44, 62, and 65 each coordinate [2Fe-2S] cluster.

It belongs to the bacterial ring-hydroxylating dioxygenase ferredoxin component family. This dioxygenase system consists of four proteins: the two subunits of the hydroxylase component (HcaE and HcaF), a ferredoxin (HcaC) and a ferredoxin reductase (HcaD). The cofactor is [2Fe-2S] cluster.

It participates in aromatic compound metabolism; 3-phenylpropanoate degradation. Its function is as follows. Part of the multicomponent 3-phenylpropionate dioxygenase, that converts 3-phenylpropionic acid (PP) and cinnamic acid (CI) into 3-phenylpropionate-dihydrodiol (PP-dihydrodiol) and cinnamic acid-dihydrodiol (CI-dihydrodiol), respectively. This protein seems to be a 2Fe-2S ferredoxin. The polypeptide is 3-phenylpropionate/cinnamic acid dioxygenase ferredoxin subunit (Photorhabdus laumondii subsp. laumondii (strain DSM 15139 / CIP 105565 / TT01) (Photorhabdus luminescens subsp. laumondii)).